The following is a 348-amino-acid chain: Phospho-2-dehydro-3-deoxyheptonate aldolase, Trp-sensitive (348 aa).

Belongs to the class-I DAHP synthase family.

It catalyses the reaction D-erythrose 4-phosphate + phosphoenolpyruvate + H2O = 7-phospho-2-dehydro-3-deoxy-D-arabino-heptonate + phosphate. It participates in metabolic intermediate biosynthesis; chorismate biosynthesis; chorismate from D-erythrose 4-phosphate and phosphoenolpyruvate: step 1/7. Its function is as follows. Stereospecific condensation of phosphoenolpyruvate (PEP) and D-erythrose-4-phosphate (E4P) giving rise to 3-deoxy-D-arabino-heptulosonate-7-phosphate (DAHP). This Shigella flexneri protein is Phospho-2-dehydro-3-deoxyheptonate aldolase, Trp-sensitive (aroH).